The chain runs to 1863 residues: Breast cancer type 1 susceptibility protein homolog (1863 aa).

M1 carries the post-translational modification N-acetylmethionine. Residues 24 to 65 form an RING-type zinc finger; the sequence is CPICLELIKEPVSTKCDHIFCKFCMLKLLNQKKGPSQCPLCK. A Glycyl lysine isopeptide (Lys-Gly) (interchain with G-Cter in SUMO2) cross-link involves residue K109. The residue at position 114 (S114) is a Phosphoserine. Residues 230–267 form a disordered region; the sequence is ETDVTNTEHHQPSNNDLNTTEKRATERHPEKYQGSSVS. Residues 248 to 260 show a composition bias toward basic and acidic residues; that stretch reads TTEKRATERHPEK. K301 participates in a covalent cross-link: Glycyl lysine isopeptide (Lys-Gly) (interchain with G-Cter in SUMO2). The disordered stretch occupies residues 306–338; that stretch reads NKSKQPGLARSQHNRWAGSKETCNDRRTPSTEK. The span at 327 to 338 shows a compositional bias: basic and acidic residues; sequence TCNDRRTPSTEK. Residue K339 forms a Glycyl lysine isopeptide (Lys-Gly) (interchain with G-Cter in SUMO2) linkage. S395, S398, S423, and S434 each carry phosphoserine. Residues K443, K459, and K519 each participate in a glycyl lysine isopeptide (Lys-Gly) (interchain with G-Cter in SUMO2) cross-link. S551 carries the phosphoserine modification. Glycyl lysine isopeptide (Lys-Gly) (interchain with G-Cter in SUMO2) cross-links involve residues K583 and K654. A disordered region spans residues 650 to 739; the sequence is IKKKKYNQMP…EKEEKLETVK (90 aa). A phosphoserine mark is found at S694, S708, and S725. Residues 705-716 show a composition bias toward polar residues; the sequence is APGSFTNCSNTS. The segment covering 727–737 has biased composition (basic and acidic residues); the sequence is PREEKEEKLET. Glycyl lysine isopeptide (Lys-Gly) (interchain with G-Cter in SUMO2) cross-links involve residues K734 and K739. S753 and S840 each carry phosphoserine. The segment at 896–915 is disordered; it reads SPKVTFEREQKEQNQGKNES. Basic and acidic residues predominate over residues 900-909; sequence TFEREQKEQN. Glycyl lysine isopeptide (Lys-Gly) (interchain with G-Cter in SUMO2) cross-links involve residues K918 and K987. Position 988 is a phosphoserine; by CHEK2 (S988). The residue at position 1009 (S1009) is a Phosphoserine. K1079 is covalently cross-linked (Glycyl lysine isopeptide (Lys-Gly) (interchain with G-Cter in SUMO2)). Phosphoserine occurs at positions 1143, 1189, 1191, 1211, 1217, 1218, 1280, 1328, 1336, 1342, and 1387. The segment at 1181–1216 is disordered; that stretch reads VQRGELSRSPSPFTHTHLAQGYRRGAKKLESSEENL. Residues 1322–1395 form a disordered region; sequence KQMRHQSESQ…SSQSDILTTQ (74 aa). Residues 1373-1395 are compositionally biased toward polar residues; sequence ESETSVSEDCSGLSSQSDILTTQ. T1394 carries the phosphothreonine modification. The tract at residues 1397-1424 is interaction with PALB2; the sequence is RDTMQDNLIKLQQEMAELEAVLEQHGSQ. Phosphoserine occurs at positions 1423, 1457, 1524, and 1542. Residues 1440 to 1505 form a disordered region; sequence EDLQNPEQST…SSPSKCPSLD (66 aa). A compositionally biased stretch (polar residues) spans 1444-1470; sequence NPEQSTSEKAVLTSQKSSEYPISQNPE. The disordered stretch occupies residues 1565 to 1642; the sequence is ESGISLFSDD…SREKPELTAS (78 aa). Positions 1610–1624 are enriched in polar residues; that stretch reads SAQSPAAAHTTNTAG. 2 BRCT domains span residues 1642 to 1736 and 1756 to 1855; these read STER…DFEV and QDRK…TYLI.

In terms of assembly, heterodimer with BARD1. Part of the BRCA1-associated genome surveillance complex (BASC), which contains BRCA1, MSH2, MSH6, MLH1, ATM, BLM, PMS2 and the MRE11-RAD50-NBN protein (MRN) complex. This association could be a dynamic process changing throughout the cell cycle and within subnuclear domains. Component of the BRCA1-A complex, at least composed of BRCA1, BARD1, UIMC1/RAP80, ABRAXAS1, BRCC3/BRCC36, BABAM2 and BABAM1/NBA1. Interacts (via the BRCT domains) with ABRAXAS1 (phosphorylated form); this is important for recruitment to sites of DNA damage. Can form a heterotetramer with two molecules of ABRAXAS1 (phosphorylated form). Component of the BRCA1-RBBP8 complex. Interacts (via the BRCT domains) with RBBP8 ('Ser-327' phosphorylated form); the interaction ubiquitinates RBBP8, regulates CHEK1 activation, and involves RBBP8 in BRCA1-dependent G2/M checkpoint control on DNA damage. Associates with RNA polymerase II holoenzyme. Interacts with SMC1A, NELFB, DCLRE1C, CLSPN. CHEK1, CHEK2, BAP1, BRCC3, UBXN1 and PCLAF. Interacts (via BRCT domains) with BRIP1 (phosphorylated form). Interacts with FANCD2 (ubiquitinated form). Interacts with H2AX (phosphorylated on 'Ser-140'). Interacts (via the BRCT domains) with ACACA (phosphorylated form); the interaction prevents dephosphorylation of ACACA. Part of a BRCA complex containing BRCA1, BRCA2 and PALB2. Interacts directly with PALB2; the interaction is essential for its function in HRR. Interacts directly with BRCA2; the interaction occurs only in the presence of PALB2 which serves as the bridging protein. Interacts (via the BRCT domains) with LMO4; the interaction represses the transcriptional activity of BRCA1. Interacts (via the BRCT domains) with CCAR2 (via N-terminus); the interaction represses the transcriptional activator activity of BRCA1. Interacts with EXD2. Interacts (via C-terminus) with DHX9; this interaction is direct and links BRCA1 to the RNA polymerase II holoenzyme. Interacts with DNA helicase ZGRF1; the interaction is increased following DNA damage induction. Post-translationally, phosphorylated in response to IR, UV, and various stimuli that cause checkpoint activation, probably by ATM or ATR. Phosphorylation at Ser-988 by CHEK2 regulates mitotic spindle assembly. Phosphorylation by AURKA regulates centrosomal microtubule nucleation. Autoubiquitinated, undergoes 'Lys-6'-linked polyubiquitination. 'Lys-6'-linked polyubiquitination does not promote degradation.

It is found in the nucleus. It localises to the chromosome. The protein resides in the cytoplasm. It carries out the reaction S-ubiquitinyl-[E2 ubiquitin-conjugating enzyme]-L-cysteine + [acceptor protein]-L-lysine = [E2 ubiquitin-conjugating enzyme]-L-cysteine + N(6)-ubiquitinyl-[acceptor protein]-L-lysine.. Functionally, E3 ubiquitin-protein ligase that specifically mediates the formation of 'Lys-6'-linked polyubiquitin chains and plays a central role in DNA repair by facilitating cellular responses to DNA damage. It is unclear whether it also mediates the formation of other types of polyubiquitin chains. The BRCA1-BARD1 heterodimer coordinates a diverse range of cellular pathways such as DNA damage repair, ubiquitination and transcriptional regulation to maintain genomic stability. Regulates centrosomal microtubule nucleation. Required for appropriate cell cycle arrests after ionizing irradiation in both the S-phase and the G2 phase of the cell cycle. Required for FANCD2 targeting to sites of DNA damage. Inhibits lipid synthesis by binding to inactive phosphorylated ACACA and preventing its dephosphorylation. Contributes to homologous recombination repair (HRR) via its direct interaction with PALB2, fine-tunes recombinational repair partly through its modulatory role in the PALB2-dependent loading of BRCA2-RAD51 repair machinery at DNA breaks. Component of the BRCA1-RBBP8 complex which regulates CHEK1 activation and controls cell cycle G2/M checkpoints on DNA damage via BRCA1-mediated ubiquitination of RBBP8. Acts as a transcriptional activator. In Pan troglodytes (Chimpanzee), this protein is Breast cancer type 1 susceptibility protein homolog (BRCA1).